A 331-amino-acid polypeptide reads, in one-letter code: Ketol-acid reductoisomerase (NADP(+)) (331 aa).

The KARI N-terminal Rossmann domain maps to alanine 2 to threonine 182. NADP(+) contacts are provided by residues phenylalanine 25–glutamine 28, serine 51, serine 53, and aspartate 83–glutamine 86. Histidine 108 is an active-site residue. Glycine 134 is a binding site for NADP(+). The 146-residue stretch at threonine 183–leucine 328 folds into the KARI C-terminal knotted domain. Residues aspartate 191, glutamate 195, glutamate 227, and glutamate 231 each coordinate Mg(2+). Residue serine 252 participates in substrate binding.

This sequence belongs to the ketol-acid reductoisomerase family. Requires Mg(2+) as cofactor.

It catalyses the reaction (2R)-2,3-dihydroxy-3-methylbutanoate + NADP(+) = (2S)-2-acetolactate + NADPH + H(+). The enzyme catalyses (2R,3R)-2,3-dihydroxy-3-methylpentanoate + NADP(+) = (S)-2-ethyl-2-hydroxy-3-oxobutanoate + NADPH + H(+). It participates in amino-acid biosynthesis; L-isoleucine biosynthesis; L-isoleucine from 2-oxobutanoate: step 2/4. Its pathway is amino-acid biosynthesis; L-valine biosynthesis; L-valine from pyruvate: step 2/4. Its function is as follows. Involved in the biosynthesis of branched-chain amino acids (BCAA). Catalyzes an alkyl-migration followed by a ketol-acid reduction of (S)-2-acetolactate (S2AL) to yield (R)-2,3-dihydroxy-isovalerate. In the isomerase reaction, S2AL is rearranged via a Mg-dependent methyl migration to produce 3-hydroxy-3-methyl-2-ketobutyrate (HMKB). In the reductase reaction, this 2-ketoacid undergoes a metal-dependent reduction by NADPH to yield (R)-2,3-dihydroxy-isovalerate. In Caldanaerobacter subterraneus subsp. tengcongensis (strain DSM 15242 / JCM 11007 / NBRC 100824 / MB4) (Thermoanaerobacter tengcongensis), this protein is Ketol-acid reductoisomerase (NADP(+)).